The following is a 391-amino-acid chain: Phosphoglycerate kinase (391 aa).

Substrate contacts are provided by residues aspartate 16–asparagine 18, arginine 31, histidine 54–arginine 57, arginine 108, and arginine 141. ATP-binding positions include lysine 192, glutamate 314, and glycine 340–threonine 343.

It belongs to the phosphoglycerate kinase family. In terms of assembly, monomer.

The protein localises to the cytoplasm. It carries out the reaction (2R)-3-phosphoglycerate + ATP = (2R)-3-phospho-glyceroyl phosphate + ADP. Its pathway is carbohydrate degradation; glycolysis; pyruvate from D-glyceraldehyde 3-phosphate: step 2/5. The sequence is that of Phosphoglycerate kinase from Coxiella burnetii (strain RSA 493 / Nine Mile phase I).